Here is a 323-residue protein sequence, read N- to C-terminus: ATP synthase gamma chain (323 aa).

It belongs to the ATPase gamma chain family. F-type ATPases have 2 components, CF(1) - the catalytic core - and CF(0) - the membrane proton channel. CF(1) has five subunits: alpha(3), beta(3), gamma(1), delta(1), epsilon(1). CF(0) has three main subunits: a, b and c.

Its subcellular location is the cell inner membrane. Produces ATP from ADP in the presence of a proton gradient across the membrane. The gamma chain is believed to be important in regulating ATPase activity and the flow of protons through the CF(0) complex. The chain is ATP synthase gamma chain from Rickettsia africae (strain ESF-5).